Here is a 194-residue protein sequence, read N- to C-terminus: Nucleoside triphosphate pyrophosphatase (194 aa).

Asp68 serves as the catalytic Proton acceptor.

The protein belongs to the Maf family. Requires a divalent metal cation as cofactor.

The protein resides in the cytoplasm. The enzyme catalyses a ribonucleoside 5'-triphosphate + H2O = a ribonucleoside 5'-phosphate + diphosphate + H(+). The catalysed reaction is a 2'-deoxyribonucleoside 5'-triphosphate + H2O = a 2'-deoxyribonucleoside 5'-phosphate + diphosphate + H(+). Nucleoside triphosphate pyrophosphatase. May have a dual role in cell division arrest and in preventing the incorporation of modified nucleotides into cellular nucleic acids. The polypeptide is Nucleoside triphosphate pyrophosphatase (Corynebacterium jeikeium (strain K411)).